We begin with the raw amino-acid sequence, 199 residues long: NAD(P)H dehydrogenase (quinone) (199 aa).

Residues Val-4 to Val-190 form the Flavodoxin-like domain. Residues Ser-10–Met-15 and Thr-78–Tyr-80 contribute to the FMN site. Tyr-12 serves as a coordination point for NAD(+). Trp-98 serves as a coordination point for substrate. FMN contacts are provided by residues Ser-113 to Gly-119 and His-134. Positions Gly-157–Phe-185 are disordered. Positions Met-163–Glu-177 are enriched in polar residues.

The protein belongs to the WrbA family. FMN is required as a cofactor.

The catalysed reaction is a quinone + NADH + H(+) = a quinol + NAD(+). The enzyme catalyses a quinone + NADPH + H(+) = a quinol + NADP(+). The protein is NAD(P)H dehydrogenase (quinone) of Brucella anthropi (strain ATCC 49188 / DSM 6882 / CCUG 24695 / JCM 21032 / LMG 3331 / NBRC 15819 / NCTC 12168 / Alc 37) (Ochrobactrum anthropi).